We begin with the raw amino-acid sequence, 874 residues long: Cellulose synthase catalytic subunit [UDP-forming] (874 aa).

4 helical membrane passes run 30–50 (SPFS…VFPL), 151–171 (ILGV…TQPF), 173–193 (PLSQ…VRRM), and 230–250 (LVCG…LVLG). Residues 271 to 364 (QWPTVDIFVP…FVAIFDCDHV (94 aa)) form a catalytic subdomain A region. The active site involves Asp-313. Substrate contacts are provided by Asp-360 and Asp-362. The tract at residues 441–501 (KPLDEIGGIA…GQRIRWARGM (61 aa)) is catalytic subdomain B. Residue Asp-457 is part of the active site. 5 helical membrane-spanning segments follow: residues 525–545 (LNAM…TAPL), 547–567 (FLLL…LFVI), 592–612 (IYET…LINP), 634–654 (VISR…AAGV), and 668–688 (VIVS…AVAV). The 97-residue stretch at 694–790 (QVRRAHRVEI…QHIDFVQCTF (97 aa)) folds into the PilZ domain. Residues 833–853 (SVKVIFRSLTALIAWIVSFIP) form a helical membrane-spanning segment.

It belongs to the glycosyltransferase 2 family. Requires Mg(2+) as cofactor.

The protein localises to the cell inner membrane. The catalysed reaction is [(1-&gt;4)-beta-D-glucosyl](n) + UDP-alpha-D-glucose = [(1-&gt;4)-beta-D-glucosyl](n+1) + UDP + H(+). The protein operates within glycan metabolism; bacterial cellulose biosynthesis. With respect to regulation, activated by bis-(3'-5') cyclic diguanylic acid (c-di-GMP). Catalytic subunit of cellulose synthase. It polymerizes uridine 5'-diphosphate glucose to cellulose, which is produced as an extracellular component for mechanical and chemical protection at the onset of the stationary phase, when the cells exhibit multicellular behavior (rdar morphotype). Coexpression of cellulose and thin aggregative fimbriae leads to a hydrophobic network with tightly packed cells embedded in a highly inert matrix. This is Cellulose synthase catalytic subunit [UDP-forming] (bcsA) from Salmonella typhi.